The primary structure comprises 644 residues: SURP and G-patch domain-containing protein 1 (644 aa).

Positions 44–54 are enriched in basic and acidic residues; that stretch reads REIEARMEQKA. Disordered regions lie at residues 44-74 and 98-122; these read REIE…ADAQ and AQAS…KRPL. T128 bears the Phosphothreonine mark. The SURP motif 1 repeat unit spans residues 188 to 230; that stretch reads VIEKLARFVAEGGPELEKVAMEDYKDNPAFTFLHDKNSREFLY. S253 is subject to Phosphoserine. Residues 263-306 form an SURP motif 2 repeat; sequence LAEKLARFIADGGPEVETIALQNNRENQAFSFLYDPNSQGYRYY. 2 disordered regions span residues 316–342 and 360–412; these read AKAG…PEAL and PAVN…PSPL. S323 bears the Phosphoserine mark. Pro residues predominate over residues 360 to 369; it reads PAVNPTPSIP. A Nuclear localization signal motif is present at residues 379–385; the sequence is KRKRKSR. S408, S410, S413, and S484 each carry phosphoserine. The G-patch domain occupies 561–608; the sequence is VENIGYQMLMKMGWKEGEGLGTEGQGIKNPVNKGATTIDGAGFGIDRP.

As to quaternary structure, component of the spliceosome.

Its subcellular location is the nucleus. Its function is as follows. Plays a role in pre-mRNA splicing. In Rattus norvegicus (Rat), this protein is SURP and G-patch domain-containing protein 1 (Sugp1).